Consider the following 319-residue polypeptide: Cytochrome c biogenesis protein CcsA (319 aa).

Helical transmembrane passes span 15 to 35, 44 to 64, 71 to 91, 96 to 116, 141 to 161, 223 to 243, 258 to 278, and 284 to 304; these read FSIV…NKIV, GMIL…IFAG, LYES…IPYF, LSAI…SGFF, MILA…LLVI, VISL…VWAN, WAFI…NINL, and AIVA…VNLL.

It belongs to the CcmF/CycK/Ccl1/NrfE/CcsA family. May interact with Ccs1.

It is found in the plastid. The protein resides in the chloroplast thylakoid membrane. Its function is as follows. Required during biogenesis of c-type cytochromes (cytochrome c6 and cytochrome f) at the step of heme attachment. This is Cytochrome c biogenesis protein CcsA from Fagopyrum esculentum subsp. ancestrale (Wild buckwheat).